A 621-amino-acid chain; its full sequence is Chaperone protein HscA homolog (621 aa).

Belongs to the heat shock protein 70 family.

Chaperone involved in the maturation of iron-sulfur cluster-containing proteins. Has a low intrinsic ATPase activity which is markedly stimulated by HscB. The protein is Chaperone protein HscA homolog of Ralstonia pickettii (strain 12J).